The following is a 136-amino-acid chain: Acidic phospholipase A2 EC-I (136 aa).

An N-terminal signal peptide occupies residues 1 to 16 (MKTLWIVAVWLIAVEG). 7 disulfide bridges follow: Cys42–Cys129, Cys44–Cys60, Cys59–Cys111, Cys65–Cys136, Cys66–Cys104, Cys73–Cys97, and Cys91–Cys102. Ca(2+)-binding residues include Tyr43, Gly45, and Gly47. His63 is an active-site residue. Asp64 is a binding site for Ca(2+). Residue Asp105 is part of the active site. Residues 112–133 (LGENVNTYDKKYKSYEDCTEEV) form a may be responsible for inhibition of the platelet-aggregation activity region.

This sequence belongs to the phospholipase A2 family. Group II subfamily. D49 sub-subfamily. In terms of assembly, monomer. The cofactor is Ca(2+). Expressed by the venom gland.

It is found in the secreted. The enzyme catalyses a 1,2-diacyl-sn-glycero-3-phosphocholine + H2O = a 1-acyl-sn-glycero-3-phosphocholine + a fatty acid + H(+). In terms of biological role, snake venom phospholipase A2 (PLA2) that inhibits human platelet aggregation induced by ADP, collagen and epinephrin (possibly by binding the platelet receptor alpha-IIb/beta-III) and induces mild edema in the foot pads of mice. PLA2 catalyzes the calcium-dependent hydrolysis of the 2-acyl groups in 3-sn-phosphoglycerides. This chain is Acidic phospholipase A2 EC-I, found in Echis carinatus (Saw-scaled viper).